Here is a 325-residue protein sequence, read N- to C-terminus: Probable cell division protein WhiA (325 aa).

Positions 273-306 (SLEELGRLADPPMTKDAVAGRIRRLLSMADRKAK) form a DNA-binding region, H-T-H motif.

This sequence belongs to the WhiA family.

In terms of biological role, involved in cell division and chromosome segregation. This Mycobacterium bovis (strain BCG / Tokyo 172 / ATCC 35737 / TMC 1019) protein is Probable cell division protein WhiA.